Reading from the N-terminus, the 41-residue chain is Entericidin A (41 aa).

An N-terminal signal peptide occupies residues 1–18 (MMKRLIVLVLLASTLLTG). Residue Cys19 is the site of N-palmitoyl cysteine attachment. Cys19 is lipidated: S-diacylglycerol cysteine.

The protein belongs to the EcnA/EcnB lipoprotein family.

It localises to the cell membrane. Acts as antidote to the effect of entericidin B. In Escherichia coli O157:H7, this protein is Entericidin A (ecnA).